We begin with the raw amino-acid sequence, 555 residues long: Phosphomethylpyrimidine synthase (555 aa).

Substrate is bound by residues asparagine 191, methionine 220, tyrosine 249, histidine 285, 305 to 307 (SRG), 346 to 349 (DGLR), and glutamate 385. Zn(2+) is bound at residue histidine 389. Tyrosine 412 is a substrate binding site. Histidine 453 is a Zn(2+) binding site. Residues cysteine 533, cysteine 536, and cysteine 541 each contribute to the [4Fe-4S] cluster site.

This sequence belongs to the ThiC family. In terms of assembly, homodimer. [4Fe-4S] cluster serves as cofactor.

It carries out the reaction 5-amino-1-(5-phospho-beta-D-ribosyl)imidazole + S-adenosyl-L-methionine = 4-amino-2-methyl-5-(phosphooxymethyl)pyrimidine + CO + 5'-deoxyadenosine + formate + L-methionine + 3 H(+). Its pathway is cofactor biosynthesis; thiamine diphosphate biosynthesis. Catalyzes the synthesis of the hydroxymethylpyrimidine phosphate (HMP-P) moiety of thiamine from aminoimidazole ribotide (AIR) in a radical S-adenosyl-L-methionine (SAM)-dependent reaction. This chain is Phosphomethylpyrimidine synthase, found in Ehrlichia ruminantium (strain Gardel).